A 327-amino-acid polypeptide reads, in one-letter code: Undecaprenyl-phosphate 4-deoxy-4-formamido-L-arabinose transferase (327 aa).

2 helical membrane passes run 236-256 (LSIFGSVIALLGFAFGLLLVV) and 270-290 (VFMLFAVLFMFIGAQFIGMGL).

Belongs to the glycosyltransferase 2 family.

The protein localises to the cell inner membrane. It carries out the reaction UDP-4-deoxy-4-formamido-beta-L-arabinose + di-trans,octa-cis-undecaprenyl phosphate = 4-deoxy-4-formamido-alpha-L-arabinopyranosyl di-trans,octa-cis-undecaprenyl phosphate + UDP. It participates in glycolipid biosynthesis; 4-amino-4-deoxy-alpha-L-arabinose undecaprenyl phosphate biosynthesis; 4-amino-4-deoxy-alpha-L-arabinose undecaprenyl phosphate from UDP-4-deoxy-4-formamido-beta-L-arabinose and undecaprenyl phosphate: step 1/2. Its pathway is bacterial outer membrane biogenesis; lipopolysaccharide biosynthesis. Catalyzes the transfer of 4-deoxy-4-formamido-L-arabinose from UDP to undecaprenyl phosphate. The modified arabinose is attached to lipid A and is required for resistance to polymyxin and cationic antimicrobial peptides. The protein is Undecaprenyl-phosphate 4-deoxy-4-formamido-L-arabinose transferase of Klebsiella pneumoniae (strain 342).